The primary structure comprises 121 residues: Non-specific lipid-transfer protein 9 (121 aa).

The signal sequence occupies residues 1–27 (MRKSISIAFVIAITIFMSHLNVFTVYS). Intrachain disulfides connect Cys31/Cys80, Cys41/Cys57, Cys58/Cys102, and Cys78/Cys116.

The protein belongs to the plant LTP family.

Functionally, plant non-specific lipid-transfer proteins transfer phospholipids as well as galactolipids across membranes. May play a role in wax or cutin deposition in the cell walls of expanding epidermal cells and certain secretory tissues. The sequence is that of Non-specific lipid-transfer protein 9 (LTP9) from Arabidopsis thaliana (Mouse-ear cress).